The following is a 340-amino-acid chain: DNA-directed RNA polymerase subunit alpha (340 aa).

The alpha N-terminal domain (alpha-NTD) stretch occupies residues 1–233; sequence MIQNEIPIPA…NLFIPLLHEK (233 aa). The alpha C-terminal domain (alpha-CTD) stretch occupies residues 263 to 340; that stretch reads RKEISFKHIF…LPKNKFSIND (78 aa).

Belongs to the RNA polymerase alpha chain family. In plastids the minimal PEP RNA polymerase catalytic core is composed of four subunits: alpha, beta, beta', and beta''. When a (nuclear-encoded) sigma factor is associated with the core the holoenzyme is formed, which can initiate transcription.

The protein resides in the plastid. It localises to the chloroplast. It catalyses the reaction RNA(n) + a ribonucleoside 5'-triphosphate = RNA(n+1) + diphosphate. Functionally, DNA-dependent RNA polymerase catalyzes the transcription of DNA into RNA using the four ribonucleoside triphosphates as substrates. This is DNA-directed RNA polymerase subunit alpha (rpoA) from Anthoceros angustus (Hornwort).